The sequence spans 482 residues: Alpha-ketoglutarate semialdehyde dehydrogenase (482 aa).

The interval 1–28 (MTDPSKNYVNGEWVTSETGETTEVTNPA) is disordered. A compositionally biased stretch (low complexity) spans 11–25 (GEWVTSETGETTEVT). The active site involves Cys284.

Belongs to the aldehyde dehydrogenase family. In terms of assembly, homotetramer.

The catalysed reaction is 2,5-dioxopentanoate + NADP(+) + H2O = 2-oxoglutarate + NADPH + 2 H(+). The protein operates within carbohydrate metabolism; D-xylose degradation. Functionally, alpha-ketoglutarate semialdehyde dehydrogenase involved in the degradation of D-xylose, a major component of hemicelluloses such as xylan. Catalyzes the fifth reaction in the xylose utilization pathway through dehydratation of alpha-ketoglutarate semialdehyde (2,5-dioxopentanoate) into alpha-ketoglutarate. The polypeptide is Alpha-ketoglutarate semialdehyde dehydrogenase (Haloferax volcanii (strain ATCC 29605 / DSM 3757 / JCM 8879 / NBRC 14742 / NCIMB 2012 / VKM B-1768 / DS2) (Halobacterium volcanii)).